Consider the following 359-residue polypeptide: Lipopolysaccharide 1,6-galactosyltransferase (359 aa).

Residues glutamine 242 and glutamate 274 each contribute to the UDP site.

Belongs to the glycosyltransferase group 1 family. Glycosyltransferase 4 subfamily.

The catalysed reaction is alpha-D-Glc-(1-&gt;3)-[L-alpha-D-Hep-(1-&gt;7)]-4-O-PO3(2-)-L-alpha-D-Hep-(1-&gt;3)-4-O-PO3(2-)-L-alpha-D-Hep-(1-&gt;5)-[alpha-Kdo-(2-&gt;4)]-alpha-Kdo-(2-&gt;6)-lipid A + UDP-alpha-D-galactose = alpha-D-Gal-(1-&gt;6)-alpha-D-Glc-(1-&gt;3)-[L-alpha-D-Hep-(1-&gt;7)]-4-O-PO3(2-)-L-alpha-D-Hep-(1-&gt;3)-4-O-PO3(2-)-L-alpha-D-Hep-(1-&gt;5)-[alpha-Kdo-(2-&gt;4)]-alpha-Kdo-(2-&gt;6)-lipid A + UDP + H(+). Its pathway is bacterial outer membrane biogenesis; LPS core biosynthesis. Galactosyltransferase involved in the biosynthesis of the core oligosaccharide region of lipopolysaccharide (LPS). Catalyzes the addition of galactose from UDP-galactose to the first glucose residue of the LPS outer core. Cannot use other sugar donors, such as UDP-glucose, UDP-glucuronic acid, UDP-galacuronic acid, GDP-mannose, ADP-glucose and GDP-glucose. In the absence of a lipid acceptor, can hydrolyze UDP-galactose to UDP and galactose. The protein is Lipopolysaccharide 1,6-galactosyltransferase of Escherichia coli (strain K12).